The chain runs to 214 residues: tRNA (guanine-N(7)-)-methyltransferase (214 aa).

S-adenosyl-L-methionine contacts are provided by Glu44, Glu69, Asp96, and Asp118. The active site involves Asp118. Lys122 contacts substrate. The segment at 124 to 129 (RHEKRR) is interaction with RNA. Substrate contacts are provided by residues Asp154 and 192–195 (TEYE).

This sequence belongs to the class I-like SAM-binding methyltransferase superfamily. TrmB family.

The enzyme catalyses guanosine(46) in tRNA + S-adenosyl-L-methionine = N(7)-methylguanosine(46) in tRNA + S-adenosyl-L-homocysteine. Its pathway is tRNA modification; N(7)-methylguanine-tRNA biosynthesis. Its function is as follows. Catalyzes the formation of N(7)-methylguanine at position 46 (m7G46) in tRNA. This is tRNA (guanine-N(7)-)-methyltransferase from Lactiplantibacillus plantarum (strain ATCC BAA-793 / NCIMB 8826 / WCFS1) (Lactobacillus plantarum).